The sequence spans 700 residues: Hedgehog-interacting protein (700 aa).

Residues 1-17 (MLKMLSFKLLLLAVALG) form the signal peptide. Residue asparagine 99 is glycosylated (N-linked (GlcNAc...) asparagine). Cystine bridges form between cysteine 216–cysteine 536, cysteine 218–cysteine 543, cysteine 402–cysteine 624, cysteine 435–cysteine 452, cysteine 500–cysteine 594, cysteine 608–cysteine 617, cysteine 612–cysteine 623, cysteine 625–cysteine 634, cysteine 639–cysteine 649, cysteine 643–cysteine 655, and cysteine 657–cysteine 666. The tract at residues 376 to 388 (LDDMEEMDGLSDF) is interaction with SHH zinc binding site. Residue aspartate 383 coordinates Zn(2+). Residues asparagine 416, asparagine 447, and asparagine 459 are each glycosylated (N-linked (GlcNAc...) asparagine). EGF-like domains follow at residues 607-634 (ECSR…GDFC) and 635-667 (RTAK…PQCE).

Belongs to the HHIP family. Interacts with all three hedgehog family members, SHH, IHH and DHH. As to expression, widely expressed in fetal and adult tissues. Highest expression in adult heart, liver and pancreas, and in fetal kidney.

Its subcellular location is the cell membrane. The protein localises to the secreted. The protein resides in the cytoplasm. In terms of biological role, modulates hedgehog signaling in several cell types including brain and lung through direct interaction with members of the hedgehog family. The chain is Hedgehog-interacting protein (HHIP) from Homo sapiens (Human).